Consider the following 130-residue polypeptide: Glycine cleavage system H protein (130 aa).

The Lipoyl-binding domain occupies 24–106 (TLTIGITDHA…YGEGWIMRIR (83 aa)). At Lys65 the chain carries N6-lipoyllysine. Residues 111-130 (DDLEQLLDPEDYQDLVADEE) form a disordered region.

Belongs to the GcvH family. The glycine cleavage system is composed of four proteins: P, T, L and H. Requires (R)-lipoate as cofactor.

Functionally, the glycine cleavage system catalyzes the degradation of glycine. The H protein shuttles the methylamine group of glycine from the P protein to the T protein. This Alkalilimnicola ehrlichii (strain ATCC BAA-1101 / DSM 17681 / MLHE-1) protein is Glycine cleavage system H protein.